The primary structure comprises 888 residues: Bifunctional lysine-specific demethylase and histidyl-hydroxylase NO66 (888 aa).

Disordered regions lie at residues 83 to 157 (AAAK…GSFS), 187 to 208 (SNNS…DSDA), and 261 to 446 (NSTS…NKLS). A compositionally biased stretch (basic and acidic residues) spans 98-108 (REKNIAKKQPE). A compositionally biased stretch (polar residues) spans 116–139 (ENVQKQLENGQENNGTLINLSNGK). Acidic residues predominate over residues 192–207 (FDFDSDGDSNDFDDSD). Over residues 273–284 (VEPRKAAKRNEP) the composition is skewed to basic and acidic residues. Residues 392 to 403 (KNKNNDNNNIDT) show a composition bias toward low complexity. Residues 404–429 (NNKKDANNKKDANNNKDINNKKDANN) are compositionally biased toward basic and acidic residues. Residues 430–444 (NKDTNNNKDNNNKNK) are compositionally biased toward low complexity. In terms of domain architecture, JmjC spans 564–709 (CSIRILNPST…NLLEVLMPSV (146 aa)). The Fe cation site is built by histidine 610, aspartate 612, and histidine 675.

The protein belongs to the ROX family. NO66 subfamily. Requires Fe(2+) as cofactor.

The protein resides in the nucleus. It catalyses the reaction N(6),N(6)-dimethyl-L-lysyl(36)-[histone H3] + 2 2-oxoglutarate + 2 O2 = L-lysyl(36)-[histone H3] + 2 formaldehyde + 2 succinate + 2 CO2. In terms of biological role, oxygenase that can act as both a histone lysine demethylase and a ribosomal histidine hydroxylase. Specifically demethylates 'Lys-4' (H3K4me) and 'Lys-36' (H3K36me) of histone H3, thereby playing a central role in histone code. This Drosophila mojavensis (Fruit fly) protein is Bifunctional lysine-specific demethylase and histidyl-hydroxylase NO66.